The following is a 479-amino-acid chain: Serine--tRNA ligase, mitochondrial (479 aa).

A mitochondrion-targeting transit peptide spans 1-42; it reads MRLTNRRFSTFLGNALPSKKKGFIFMSQLLYLRTFSTHTSYL. An L-serine-binding site is contributed by 287-289; sequence TAE. 317–319 contributes to the ATP binding site; sequence RRE. Glu340 is an L-serine binding site. 404-407 is a binding site for ATP; that stretch reads EITS. Thr438 provides a ligand contact to L-serine.

The protein belongs to the class-II aminoacyl-tRNA synthetase family. Type-1 seryl-tRNA synthetase subfamily. As to quaternary structure, homodimer. The tRNA molecule probably binds across the dimer.

It is found in the mitochondrion matrix. It carries out the reaction tRNA(Ser) + L-serine + ATP = L-seryl-tRNA(Ser) + AMP + diphosphate + H(+). Catalyzes the attachment of serine to tRNA(Ser). Is also probably able to aminoacylate tRNA(Sec) with serine, to form the misacylated tRNA L-seryl-tRNA(Sec), which will be further converted into selenocysteinyl-tRNA(Sec). This is Serine--tRNA ligase, mitochondrial (dia4) from Schizosaccharomyces pombe (strain 972 / ATCC 24843) (Fission yeast).